The chain runs to 146 residues: Peptide methionine sulfoxide reductase MsrB (146 aa).

Residues 2–125 (LKKNKDELND…NSAAVQFIPY (124 aa)) enclose the MsrB domain. Cys-114 acts as the Nucleophile in catalysis.

This sequence belongs to the MsrB Met sulfoxide reductase family.

The catalysed reaction is L-methionyl-[protein] + [thioredoxin]-disulfide + H2O = L-methionyl-(R)-S-oxide-[protein] + [thioredoxin]-dithiol. This chain is Peptide methionine sulfoxide reductase MsrB, found in Staphylococcus carnosus (strain TM300).